The sequence spans 210 residues: Uridine kinase (210 aa).

Position 14 to 21 (14 to 21 (GGSGSGKT)) interacts with ATP.

Belongs to the uridine kinase family.

It is found in the cytoplasm. The catalysed reaction is uridine + ATP = UMP + ADP + H(+). It catalyses the reaction cytidine + ATP = CMP + ADP + H(+). Its pathway is pyrimidine metabolism; CTP biosynthesis via salvage pathway; CTP from cytidine: step 1/3. It functions in the pathway pyrimidine metabolism; UMP biosynthesis via salvage pathway; UMP from uridine: step 1/1. This is Uridine kinase from Deinococcus radiodurans (strain ATCC 13939 / DSM 20539 / JCM 16871 / CCUG 27074 / LMG 4051 / NBRC 15346 / NCIMB 9279 / VKM B-1422 / R1).